The following is a 24-amino-acid chain: Brevinin-1Pe (24 aa).

Cys18 and Cys24 are disulfide-bonded.

In terms of tissue distribution, expressed by the skin glands.

It is found in the secreted. Antibacterial activity against Gram-positive bacterium S.aureus and Gram-negative bacterium E.coli. Has activity against C.albicans. In Lithobates pipiens (Northern leopard frog), this protein is Brevinin-1Pe.